Reading from the N-terminus, the 369-residue chain is Anthranilate phosphoribosyltransferase (369 aa).

Residues glycine 111, 114–115 (GD), threonine 119, 121–124 (NIST), 139–147 (KHGNRGVSS), and serine 151 each bind 5-phospho-alpha-D-ribose 1-diphosphate. Residue glycine 111 coordinates anthranilate. Serine 123 lines the Mg(2+) pocket. Asparagine 142 is an anthranilate binding site. Arginine 197 is a binding site for anthranilate. Residues aspartate 256 and glutamate 257 each coordinate Mg(2+).

It belongs to the anthranilate phosphoribosyltransferase family. Homodimer. It depends on Mg(2+) as a cofactor.

It catalyses the reaction N-(5-phospho-beta-D-ribosyl)anthranilate + diphosphate = 5-phospho-alpha-D-ribose 1-diphosphate + anthranilate. The protein operates within amino-acid biosynthesis; L-tryptophan biosynthesis; L-tryptophan from chorismate: step 2/5. Functionally, catalyzes the transfer of the phosphoribosyl group of 5-phosphorylribose-1-pyrophosphate (PRPP) to anthranilate to yield N-(5'-phosphoribosyl)-anthranilate (PRA). This Cupriavidus pinatubonensis (strain JMP 134 / LMG 1197) (Cupriavidus necator (strain JMP 134)) protein is Anthranilate phosphoribosyltransferase.